A 482-amino-acid polypeptide reads, in one-letter code: Putative metallophosphoesterase F40B5.2 (482 aa).

4 helical membrane passes run 15–35 (MNLKLKIAIIVIGFIHVSIAI), 129–149 (ALMMLFLFLSHIAMFFYYIFL), 156–176 (IAITSLSFIAAYAHILIFLLI), and 205–225 (CYHILLALILGFIFMFAGLYT). Positions 256, 258, 288, 319, 421, and 423 each coordinate a divalent metal cation.

Belongs to the metallophosphoesterase superfamily. LOC643853 family.

It localises to the membrane. This Caenorhabditis elegans protein is Putative metallophosphoesterase F40B5.2.